The following is a 288-amino-acid chain: Phosphopantetheinyl transferase (288 aa).

CoA-binding positions include R60, 99–104 (RTEMGK), and 118–121 (NLSH). Mg(2+)-binding residues include D139 and E196. Residue 196–200 (EAYLK) participates in CoA binding.

The protein belongs to the P-Pant transferase superfamily. AcpS family. As to quaternary structure, monomer.

The protein localises to the cytoplasm. It localises to the cytosol. The catalysed reaction is apo-[ACP] + CoA = holo-[ACP] + adenosine 3',5'-bisphosphate + H(+). Its pathway is lipid metabolism; fatty acid biosynthesis. Functionally, phosphopantetheinyl transferase that is essential for attaching phosphopantetheine to ACP domains of the polyunsaturated fatty acid (PUFA) synthase converting the inactive apo-synthase to the active holo-synthase. The protein is Phosphopantetheinyl transferase of Thraustochytrium sp. (strain ATCC 26185 / S-3).